Reading from the N-terminus, the 406-residue chain is DNA primase large subunit PriL (406 aa).

[4Fe-4S] cluster-binding residues include C302, C375, C384, and C389.

This sequence belongs to the eukaryotic-type primase large subunit family. Heterodimer of a small subunit (PriS) and a large subunit (PriL). The cofactor is [4Fe-4S] cluster.

Functionally, regulatory subunit of DNA primase, an RNA polymerase that catalyzes the synthesis of short RNA molecules used as primers for DNA polymerase during DNA replication. Stabilizes and modulates the activity of the small subunit, increasing the rate of DNA synthesis, and conferring RNA synthesis capability. The DNA polymerase activity may enable DNA primase to also catalyze primer extension after primer synthesis. May also play a role in DNA repair. The protein is DNA primase large subunit PriL of Methanopyrus kandleri (strain AV19 / DSM 6324 / JCM 9639 / NBRC 100938).